Here is a 354-residue protein sequence, read N- to C-terminus: Holliday junction branch migration complex subunit RuvB (354 aa).

A large ATPase domain (RuvB-L) region spans residues 1 to 183 (MTGDNLVSAY…FGFVAHLDFY (183 aa)). Residues R23, G64, K67, T68, S69, 130 to 132 (EDF), R173, Y183, and R220 each bind ATP. Mg(2+) is bound at residue T68. Residues 184–254 (SPADLETLLH…AARAALLVYD (71 aa)) form a small ATPAse domain (RuvB-S) region. The segment at 257–354 (ALGLDRLDRQ…DLFSVEPDQP (98 aa)) is head domain (RuvB-H). The DNA site is built by R312 and R317. The tract at residues 330–354 (TPPNGIFGSDAPPASDLFSVEPDQP) is disordered.

Belongs to the RuvB family. Homohexamer. Forms an RuvA(8)-RuvB(12)-Holliday junction (HJ) complex. HJ DNA is sandwiched between 2 RuvA tetramers; dsDNA enters through RuvA and exits via RuvB. An RuvB hexamer assembles on each DNA strand where it exits the tetramer. Each RuvB hexamer is contacted by two RuvA subunits (via domain III) on 2 adjacent RuvB subunits; this complex drives branch migration. In the full resolvosome a probable DNA-RuvA(4)-RuvB(12)-RuvC(2) complex forms which resolves the HJ.

The protein resides in the cytoplasm. The catalysed reaction is ATP + H2O = ADP + phosphate + H(+). The RuvA-RuvB-RuvC complex processes Holliday junction (HJ) DNA during genetic recombination and DNA repair, while the RuvA-RuvB complex plays an important role in the rescue of blocked DNA replication forks via replication fork reversal (RFR). RuvA specifically binds to HJ cruciform DNA, conferring on it an open structure. The RuvB hexamer acts as an ATP-dependent pump, pulling dsDNA into and through the RuvAB complex. RuvB forms 2 homohexamers on either side of HJ DNA bound by 1 or 2 RuvA tetramers; 4 subunits per hexamer contact DNA at a time. Coordinated motions by a converter formed by DNA-disengaged RuvB subunits stimulates ATP hydrolysis and nucleotide exchange. Immobilization of the converter enables RuvB to convert the ATP-contained energy into a lever motion, pulling 2 nucleotides of DNA out of the RuvA tetramer per ATP hydrolyzed, thus driving DNA branch migration. The RuvB motors rotate together with the DNA substrate, which together with the progressing nucleotide cycle form the mechanistic basis for DNA recombination by continuous HJ branch migration. Branch migration allows RuvC to scan DNA until it finds its consensus sequence, where it cleaves and resolves cruciform DNA. The chain is Holliday junction branch migration complex subunit RuvB from Salinispora arenicola (strain CNS-205).